We begin with the raw amino-acid sequence, 306 residues long: 4-hydroxy-tetrahydrodipicolinate synthase (306 aa).

Residue Thr49 participates in pyruvate binding. Tyr136 serves as the catalytic Proton donor/acceptor. The active-site Schiff-base intermediate with substrate is the Lys164. Pyruvate is bound at residue Ile207.

This sequence belongs to the DapA family. Homotetramer; dimer of dimers.

Its subcellular location is the cytoplasm. It carries out the reaction L-aspartate 4-semialdehyde + pyruvate = (2S,4S)-4-hydroxy-2,3,4,5-tetrahydrodipicolinate + H2O + H(+). It participates in amino-acid biosynthesis; L-lysine biosynthesis via DAP pathway; (S)-tetrahydrodipicolinate from L-aspartate: step 3/4. In terms of biological role, catalyzes the condensation of (S)-aspartate-beta-semialdehyde [(S)-ASA] and pyruvate to 4-hydroxy-tetrahydrodipicolinate (HTPA). The polypeptide is 4-hydroxy-tetrahydrodipicolinate synthase (Haloarcula marismortui (strain ATCC 43049 / DSM 3752 / JCM 8966 / VKM B-1809) (Halobacterium marismortui)).